A 177-amino-acid chain; its full sequence is Nucleoside triphosphate/diphosphate phosphatase (177 aa).

The active-site Proton donor is the arginine 23. Mg(2+) is bound by residues asparagine 87, aspartate 103, aspartate 105, aspartate 107, aspartate 120, and glutamate 123.

This sequence belongs to the Ntdp family. Mg(2+) is required as a cofactor.

The catalysed reaction is a ribonucleoside 5'-triphosphate + H2O = a ribonucleoside 5'-diphosphate + phosphate + H(+). The enzyme catalyses a ribonucleoside 5'-diphosphate + H2O = a ribonucleoside 5'-phosphate + phosphate + H(+). In terms of biological role, has nucleoside phosphatase activity towards nucleoside triphosphates and nucleoside diphosphates. The polypeptide is Nucleoside triphosphate/diphosphate phosphatase (Streptococcus gordonii (strain Challis / ATCC 35105 / BCRC 15272 / CH1 / DL1 / V288)).